Consider the following 392-residue polypeptide: O-phospho-L-seryl-tRNA:Cys-tRNA synthase (392 aa).

Pyridoxal 5'-phosphate-binding positions include 85–86 (AR), Asn-190, and 213–215 (SGH). Position 216 is an N6-(pyridoxal phosphate)lysine (Lys-216).

This sequence belongs to the SepCysS family. As to quaternary structure, homodimer. Interacts with SepRS. Pyridoxal 5'-phosphate is required as a cofactor.

It carries out the reaction O-phospho-L-seryl-tRNA(Cys) + hydrogen sulfide + H(+) = L-cysteinyl-tRNA(Cys) + phosphate. Functionally, converts O-phospho-L-seryl-tRNA(Cys) (Sep-tRNA(Cys)) to L-cysteinyl-tRNA(Cys) (Cys-tRNA(Cys)). In Methanoculleus marisnigri (strain ATCC 35101 / DSM 1498 / JR1), this protein is O-phospho-L-seryl-tRNA:Cys-tRNA synthase.